Consider the following 1032-residue polypeptide: Probable LRR receptor-like serine/threonine-protein kinase At1g56130 (1032 aa).

Residues 1–29 (MTRIRRSPCLLLLIIWFMCIAGSVQVVQS) form the signal peptide. Over 30–636 (QNQTGATTHP…PPSKGKNRTG (607 aa)) the chain is Extracellular. N-linked (GlcNAc...) asparagine glycans are attached at residues Asn31, Asn61, and Asn95. LRR repeat units follow at residues 101 to 122 (ITNI…LWTL), 123 to 146 (TYLT…IGNL), 148 to 170 (RMQW…IGLL), 171 to 194 (TDLR…IGRC), 196 to 217 (KLQQ…SFAN), 242 to 265 (WTKL…SFSN), 290 to 314 (MKSL…IGEH), 315 to 338 (SSLR…LFNL), 340 to 360 (QLTH…TQKT), and 361 to 385 (QSLR…SLPS). N-linked (GlcNAc...) asparagine glycosylation is present at Asn145. Asn182 is a glycosylation site (N-linked (GlcNAc...) asparagine). 5 N-linked (GlcNAc...) asparagine glycosylation sites follow: Asn265, Asn302, Asn337, Asn348, and Asn352. Residues Asn394, Asn580, and Asn633 are each glycosylated (N-linked (GlcNAc...) asparagine). A helical membrane pass occupies residues 637–657 (TIVGVIVGVGLLSILAGVVMF). Over 658–1032 (TIRKRRKRYT…MLGSKINEGR (375 aa)) the chain is Cytoplasmic. Phosphothreonine is present on Thr683. The 275-residue stretch at 694–968 (FDPSNKLGEG…VAMLSGDVEI (275 aa)) folds into the Protein kinase domain. Residues 700 to 708 (LGEGGFGPV) and Lys722 contribute to the ATP site. Position 767 is a phosphotyrosine (Tyr767). Asp818 (proton acceptor) is an active-site residue. 2 positions are modified to phosphoserine: Ser822 and Ser851. Thr852 and Thr857 each carry phosphothreonine. A Phosphotyrosine modification is found at Tyr865. The disordered stretch occupies residues 1008-1032 (APGSEISPRDSDFKPMLGSKINEGR).

The protein belongs to the protein kinase superfamily. Ser/Thr protein kinase family.

The protein resides in the cell membrane. It carries out the reaction L-seryl-[protein] + ATP = O-phospho-L-seryl-[protein] + ADP + H(+). The catalysed reaction is L-threonyl-[protein] + ATP = O-phospho-L-threonyl-[protein] + ADP + H(+). In Arabidopsis thaliana (Mouse-ear cress), this protein is Probable LRR receptor-like serine/threonine-protein kinase At1g56130.